A 576-amino-acid chain; its full sequence is Interleukin-1 receptor type 1 (576 aa).

The N-terminal stretch at 1–19 (MENMKVLLGLICLMVPLLS) is a signal peptide. Residues 20 to 338 (LEIDVCTEYP…QLIYPVPDFK (319 aa)) are Extracellular-facing. 3 disulfides stabilise this stretch: Cys-25–Cys-107, Cys-46–Cys-99, and Cys-145–Cys-199. 3 Ig-like C2-type domains span residues 25 to 115 (CTEY…VTVT), 121 to 213 (PGLC…YPVT), and 229 to 329 (PVIL…AHVQ). Asn-63, Asn-103, Asn-174, Asn-236, Asn-252, Asn-266, and Asn-300 each carry an N-linked (GlcNAc...) asparagine glycan. Cys-251 and Cys-315 are joined by a disulfide. The chain crosses the membrane as a helical span at residues 339–359 (NYLIGGFIILTATIVCCVCIY). Residues 360–576 (KVFKVDIVLW…LPAATHLPLG (217 aa)) are Cytoplasmic-facing. In terms of domain architecture, TIR spans 386–541 (KTYDAYILYP…RFWKNLRYQM (156 aa)). Residue Glu-473 is part of the active site. Residue Tyr-499 is modified to Phosphotyrosine. Phosphothreonine; by PKC is present on Thr-556.

This sequence belongs to the interleukin-1 receptor family. In terms of assembly, the interleukin-1 receptor complex is a heterodimer of IL1R1 and IL1RAP. Interacts with PIK3R1. Interacts with IL1A. In terms of processing, a soluble form (sIL1R1) is probably produced by proteolytic cleavage at the cell surface (shedding). Rapidly phosphorylated on Tyr-499 in response to IL-1, which creates a SH2 binding site for the PI 3-kinase regulatory subunit PIK3R1. In terms of tissue distribution, isoform 2 is expressed in various brain tissues.

It is found in the membrane. The protein localises to the cell membrane. It localises to the secreted. The enzyme catalyses NAD(+) + H2O = ADP-D-ribose + nicotinamide + H(+). Receptor for IL1A, IL1B and IL1RN. After binding to interleukin-1 associates with the coreceptor IL1RAP to form the high affinity interleukin-1 receptor complex which mediates interleukin-1-dependent activation of NF-kappa-B, MAPK and other pathways. Signaling involves the recruitment of adapter molecules such as TOLLIP, MYD88, and IRAK1 or IRAK2 via the respective TIR domains of the receptor/coreceptor subunits. Binds ligands with comparable affinity and binding of antagonist IL1RN prevents association with IL1RAP to form a signaling complex. Involved in IL1B-mediated costimulation of IFNG production from T-helper 1 (Th1) cells. Functionally, unable to mediate canonical IL-1 signaling. Cooperates with IL1RAP isoform 3 to mediate IL1B-induced neuronal activity including IL1B-potentiated NMDA-induced calcium influx mediated by Akt kinase activation. The sequence is that of Interleukin-1 receptor type 1 (Il1r1) from Mus musculus (Mouse).